A 237-amino-acid chain; its full sequence is Ribitol-5-phosphate cytidylyltransferase (237 aa).

CTP is bound by residues 7 to 10 (LAGG) and 80 to 86 (GEDRNET).

The protein belongs to the IspD/TarI cytidylyltransferase family. TarI subfamily.

The enzyme catalyses D-ribitol 5-phosphate + CTP + H(+) = CDP-L-ribitol + diphosphate. The protein operates within cell wall biogenesis; poly(ribitol phosphate) teichoic acid biosynthesis. Its function is as follows. Catalyzes the transfer of the cytidylyl group of CTP to D-ribitol 5-phosphate. The sequence is that of Ribitol-5-phosphate cytidylyltransferase from Listeria innocua serovar 6a (strain ATCC BAA-680 / CLIP 11262).